The chain runs to 300 residues: D-alanine--D-alanine ligase (300 aa).

The ATP-grasp domain occupies 99-293 (KKILKYANIN…FAELLNSIVK (195 aa)). 126–181 (IEKIGYPVFVKPNSGGSSVATNLVKDKEGIKEAVELALKYDKEVMIENYTKGEEIT) serves as a coordination point for ATP. Mg(2+) contacts are provided by Asp248, Glu260, and Asn262.

The protein belongs to the D-alanine--D-alanine ligase family. Mg(2+) is required as a cofactor. Requires Mn(2+) as cofactor.

The protein resides in the cytoplasm. The enzyme catalyses 2 D-alanine + ATP = D-alanyl-D-alanine + ADP + phosphate + H(+). It functions in the pathway cell wall biogenesis; peptidoglycan biosynthesis. Cell wall formation. This chain is D-alanine--D-alanine ligase, found in Clostridium botulinum (strain Okra / Type B1).